Consider the following 751-residue polypeptide: Zinc finger protein 184 (751 aa).

The region spanning 28–99 (VTFKDVIVDF…EPSIPVGTCA (72 aa)) is the KRAB domain. S117, S122, and S199 each carry phosphoserine. A compositionally biased stretch (polar residues) spans 191–202 (SNLVTQEPSPEE). The interval 191-212 (SNLVTQEPSPEETSTKRSIKQN) is disordered. K206 is covalently cross-linked (Glycyl lysine isopeptide (Lys-Gly) (interchain with G-Cter in SUMO2)). 19 consecutive C2H2-type zinc fingers follow at residues 222–244 (CKCN…QRTH), 250–272 (YKCN…QRIH), 278–300 (YKCD…QRIH), 306–328 (YKCD…QRIH), 334–356 (YTCN…QKIH), 362–384 (FKCD…QKIH), 390–412 (YKCN…HMIH), 418–440 (YECN…QKTH), 446–468 (YDCA…LKIH), 474–496 (YKCN…RRIH), 502–524 (FECS…QKTH), 530–552 (YECK…ERIH), 558–580 (YQCH…RKIH), 586–608 (YKCN…KRIH), 614–636 (YECA…QKTH), 642–664 (YQCN…QRIH), 670–692 (YKCN…QNTH), 698–720 (YNCN…QRIH), and 726–748 (FGCN…QRLH).

The protein belongs to the krueppel C2H2-type zinc-finger protein family. Predominant expression in testis.

It localises to the nucleus. Its function is as follows. May be involved in transcriptional regulation. In Homo sapiens (Human), this protein is Zinc finger protein 184 (ZNF184).